The following is a 437-amino-acid chain: MTNYFDKIEKVNYEGADSINPFAYKYYNANEVILGKTMADHLRLAVCYWHTFCWNGNDMFGVGSLDRSWQKQTDPLAGAKQKADIAFEFLTKLGVPYYCFHDVDIAPEGNSYQEYVNNFNTIVDVLEQKQAETGIKLLWGTANCFTNPRYMSGAATNPNPEIFARAGAQVFNAMNATKRLGGENYVLWGGREGYETLLNTDLRREREQIGRFMQMVVEHKHKIGFKGTLLIEPKPQEPTKHQYDYDVATVYGFLKQFGLEKEIKVNIEANHATLAGHTFQHEIATAAALDILGSIDANRGDPQLGWDTDQFPNSVEENTLAIYEILKAGGLTTGGLNFDAKIRRQSIDPYDLFHAHIGAIDVLALSLRRAAKMLEDQTLQHIVEQRYAGWNGELGQQILNGKSSLEALAQAAQHLEPQPVSGQQEYLENLVNSYIYR.

Catalysis depends on residues histidine 101 and aspartate 104. Residues glutamate 232, glutamate 268, histidine 271, aspartate 296, aspartate 307, aspartate 309, and aspartate 339 each coordinate Mg(2+).

This sequence belongs to the xylose isomerase family. As to quaternary structure, homotetramer. Requires Mg(2+) as cofactor.

Its subcellular location is the cytoplasm. It catalyses the reaction alpha-D-xylose = alpha-D-xylulofuranose. The protein is Xylose isomerase of Actinobacillus succinogenes (strain ATCC 55618 / DSM 22257 / CCUG 43843 / 130Z).